The chain runs to 341 residues: UDP-3-O-acylglucosamine N-acyltransferase (341 aa).

Residue His239 is the Proton acceptor of the active site.

It belongs to the transferase hexapeptide repeat family. LpxD subfamily. In terms of assembly, homotrimer.

It carries out the reaction a UDP-3-O-[(3R)-3-hydroxyacyl]-alpha-D-glucosamine + a (3R)-hydroxyacyl-[ACP] = a UDP-2-N,3-O-bis[(3R)-3-hydroxyacyl]-alpha-D-glucosamine + holo-[ACP] + H(+). The protein operates within bacterial outer membrane biogenesis; LPS lipid A biosynthesis. In terms of biological role, catalyzes the N-acylation of UDP-3-O-acylglucosamine using 3-hydroxyacyl-ACP as the acyl donor. Is involved in the biosynthesis of lipid A, a phosphorylated glycolipid that anchors the lipopolysaccharide to the outer membrane of the cell. The sequence is that of UDP-3-O-acylglucosamine N-acyltransferase from Shewanella sp. (strain MR-7).